The following is a 253-amino-acid chain: uncharacterized protein (253 aa).

6–30 lines the NADP(+) pocket; it reads IITASDSGIGKECALLLAQQGFDIG. A substrate-binding site is contributed by S140. The active-site Proton acceptor is Y153.

The protein belongs to the short-chain dehydrogenases/reductases (SDR) family.

This is an uncharacterized protein from Escherichia coli (strain K12).